The chain runs to 291 residues: Light-independent protochlorophyllide reductase iron-sulfur ATP-binding protein (291 aa).

Residues 10–15 and Lys-39 contribute to the ATP site; that span reads GIGKST. Ser-14 provides a ligand contact to Mg(2+). [4Fe-4S] cluster-binding residues include Cys-95 and Cys-129. 180 to 181 provides a ligand contact to ATP; sequence NR.

Belongs to the NifH/BchL/ChlL family. Homodimer. Protochlorophyllide reductase is composed of three subunits; ChlL, ChlN and ChlB. Requires [4Fe-4S] cluster as cofactor.

The protein localises to the plastid. Its subcellular location is the chloroplast. It catalyses the reaction chlorophyllide a + oxidized 2[4Fe-4S]-[ferredoxin] + 2 ADP + 2 phosphate = protochlorophyllide a + reduced 2[4Fe-4S]-[ferredoxin] + 2 ATP + 2 H2O. It functions in the pathway porphyrin-containing compound metabolism; chlorophyll biosynthesis (light-independent). Functionally, component of the dark-operative protochlorophyllide reductase (DPOR) that uses Mg-ATP and reduced ferredoxin to reduce ring D of protochlorophyllide (Pchlide) to form chlorophyllide a (Chlide). This reaction is light-independent. The L component serves as a unique electron donor to the NB-component of the complex, and binds Mg-ATP. In Picea abies (Norway spruce), this protein is Light-independent protochlorophyllide reductase iron-sulfur ATP-binding protein.